A 43-amino-acid polypeptide reads, in one-letter code: Protein PsbN (43 aa).

Residues isoleucine 7–glutamine 29 form a helical membrane-spanning segment.

It belongs to the PsbN family.

It is found in the plastid membrane. Its function is as follows. May play a role in photosystem I and II biogenesis. This chain is Protein PsbN, found in Cuscuta reflexa (Southern Asian dodder).